Consider the following 218-residue polypeptide: Glutathione S-transferase PM239X14 (218 aa).

The 84-residue stretch at 2 to 85 folds into the GST N-terminal domain; sequence VTVKLYGMAY…YLVAKYGKGS (84 aa). Glutathione contacts are provided by residues 12–13, 41–42, 55–56, and 69–70; these read ST, HK, VI, and ES. The GST C-terminal domain maps to 93 to 218; the sequence is DPKAYGLFEQ…LLRNSSKEFM (126 aa).

The protein belongs to the GST superfamily. Phi family. As to expression, expressed in vegetative rosettes.

It localises to the cytoplasm. The protein localises to the cytosol. It catalyses the reaction RX + glutathione = an S-substituted glutathione + a halide anion + H(+). Its function is as follows. Specifically catalyzes the conjugation of synthetic 1-chloro-2,4-ditrobenzene to GSH. Also functions as a glutathione peroxidase, converting linoleate oxidation products into their corresponding hydroxyacids. This enzyme may thus serve to protect the cell from oxygen toxicity as well as from exogenous toxins such as herbicides. This is Glutathione S-transferase PM239X14 from Arabidopsis thaliana (Mouse-ear cress).